Reading from the N-terminus, the 88-residue chain is Small ribosomal subunit protein bS16 (88 aa).

This sequence belongs to the bacterial ribosomal protein bS16 family.

This is Small ribosomal subunit protein bS16 from Desulfitobacterium hafniense (strain DSM 10664 / DCB-2).